The primary structure comprises 518 residues: Nuclear receptor ROR-gamma (518 aa).

A modulating region spans residues 1-30 (MDRAPQRQHQASRELLAAKKTHTSQIEVIP). 2 NR C4-type zinc fingers span residues 31-51 (CKIC…CEGC) and 67-91 (CTRQ…LQKC). The segment at residues 31–96 (CKICGDKSSG…RLQKCLALGM (66 aa)) is a DNA-binding region (nuclear receptor). Disordered stretches follow at residues 105–183 (RMSK…SGSG) and 238–258 (HPGL…SFRS). The span at 109-118 (KQRDSLHAEV) shows a compositional bias: basic and acidic residues. Over residues 119 to 130 (QKQLQQRQQQQQ) the composition is skewed to low complexity. Residues 269–508 (EIEHLVQSVC…PPLYKELFST (240 aa)) form the NR LBD domain. The short motif at 501–506 (LYKELF) is the AF-2 element.

It belongs to the nuclear hormone receptor family. NR1 subfamily. As to quaternary structure, interacts (via AF-2 motif) with the coactivators NCOA1, NCOA2 and PPARGC1A (via LXXLL motif). Interacts with the corepressor NCOR1. Interacts with CRY1. Interacts (via AF-2 motif) with PROX1. Interacts with FOXP3. Interacts with NR0B2.

It is found in the nucleus. In terms of biological role, nuclear receptor that binds DNA as a monomer to ROR response elements (RORE) containing a single core motif half-site 5'-AGGTCA-3' preceded by a short A-T-rich sequence. Key regulator of cellular differentiation, immunity, peripheral circadian rhythm as well as lipid, steroid, xenobiotics and glucose metabolism. Considered to have intrinsic transcriptional activity, have some natural ligands like oxysterols that act as agonists (25-hydroxycholesterol) or inverse agonists (7-oxygenated sterols), enhancing or repressing the transcriptional activity, respectively. Recruits distinct combinations of cofactors to target gene regulatory regions to modulate their transcriptional expression, depending on the tissue, time and promoter contexts. Regulates the circadian expression of clock genes such as CRY1, BMAL1 and NR1D1 in peripheral tissues and in a tissue-selective manner. Competes with NR1D1 for binding to their shared DNA response element on some clock genes such as BMAL1, CRY1 and NR1D1 itself, resulting in NR1D1-mediated repression or RORC-mediated activation of the expression, leading to the circadian pattern of clock genes expression. Therefore influences the period length and stability of the clock. Involved in the regulation of the rhythmic expression of genes involved in glucose and lipid metabolism, including PLIN2 and AVPR1A. Negative regulator of adipocyte differentiation through the regulation of early phase genes expression, such as MMP3. Controls adipogenesis as well as adipocyte size and modulates insulin sensitivity in obesity. In liver, has specific and redundant functions with RORA as positive or negative modulator of expression of genes encoding phase I and Phase II proteins involved in the metabolism of lipids, steroids and xenobiotics, such as SULT1E1. Also plays a role in the regulation of hepatocyte glucose metabolism through the regulation of G6PC1 and PCK1. Essential for thymopoiesis and the development of several secondary lymphoid tissues, including lymph nodes and Peyer's patches. Required for the generation of LTi (lymphoid tissue inducer) cells. Regulates thymocyte survival through DNA-binding on ROREs of target gene promoter regions and recruitment of coactivaros via the AF-2. Also plays a key role, downstream of IL6 and TGFB and synergistically with RORA, for lineage specification of uncommitted CD4(+) T-helper (T(H)) cells into T(H)17 cells, antagonizing the T(H)1 program. Probably regulates IL17 and IL17F expression on T(H) by binding to the essential enhancer conserved non-coding sequence 2 (CNS2) in the IL17-IL17F locus. May also play a role in the pre-TCR activation cascade leading to the maturation of alpha/beta T-cells and may participate in the regulation of DNA accessibility in the TCR-J(alpha) locus. Regulates the rhythmic expression of PROX1 and promotes its nuclear localization. Plays an indispensable role in the induction of IFN-gamma dependent anti-mycobacterial systemic immunity. The chain is Nuclear receptor ROR-gamma (RORC) from Pongo abelii (Sumatran orangutan).